The sequence spans 387 residues: Homoserine O-succinyltransferase (387 aa).

The AB hydrolase-1 domain occupies 49-358 (NAILICHALS…DAEQGHDSFL (310 aa)). Ser-156 serves as the catalytic Nucleophile. Arg-226 contacts substrate. Residues Asp-321 and His-354 contribute to the active site. Asp-355 serves as a coordination point for substrate.

It belongs to the AB hydrolase superfamily. MetX family. In terms of assembly, homodimer.

It localises to the cytoplasm. The catalysed reaction is L-homoserine + succinyl-CoA = O-succinyl-L-homoserine + CoA. It functions in the pathway amino-acid biosynthesis; L-methionine biosynthesis via de novo pathway; O-succinyl-L-homoserine from L-homoserine: step 1/1. Requires MetW for activity. Transfers a succinyl group from succinyl-CoA to L-homoserine, forming succinyl-L-homoserine. The chain is Homoserine O-succinyltransferase from Acinetobacter baylyi (strain ATCC 33305 / BD413 / ADP1).